The following is an 88-amino-acid chain: Cell division topological specificity factor (88 aa).

The protein belongs to the MinE family.

Functionally, prevents the cell division inhibition by proteins MinC and MinD at internal division sites while permitting inhibition at polar sites. This ensures cell division at the proper site by restricting the formation of a division septum at the midpoint of the long axis of the cell. This Escherichia fergusonii (strain ATCC 35469 / DSM 13698 / CCUG 18766 / IAM 14443 / JCM 21226 / LMG 7866 / NBRC 102419 / NCTC 12128 / CDC 0568-73) protein is Cell division topological specificity factor.